Here is a 380-residue protein sequence, read N- to C-terminus: Cystathionine beta-lyase (380 aa).

At Lys196 the chain carries N6-(pyridoxal phosphate)lysine.

It belongs to the trans-sulfuration enzymes family. Pyridoxal 5'-phosphate is required as a cofactor.

Its subcellular location is the cytoplasm. The enzyme catalyses L,L-cystathionine + H2O = L-homocysteine + pyruvate + NH4(+). It carries out the reaction an S-substituted L-cysteine + H2O = a thiol + pyruvate + NH4(+). Its pathway is amino-acid biosynthesis; L-methionine biosynthesis via de novo pathway; L-homocysteine from L-cystathionine: step 1/1. In terms of biological role, the enzymatic degradation of amino acids in cheese is believed to generate aroma compounds and therefore to be essential for flavor development. Cystathionine beta-lyase (CBL) can convert cystathionine to homocysteine but is also able to catalyze an alpha, gamma elimination. With methionine as a substrate, it produces volatile sulfur compounds which are important for flavor formation in Gouda cheese. In Lactococcus lactis subsp. cremoris (Streptococcus cremoris), this protein is Cystathionine beta-lyase (metC).